Consider the following 603-residue polypeptide: ATP-dependent zinc metalloprotease FtsH (603 aa).

Residues 1–2 (MK) are Stromal-facing. Residues 3–23 (NLWIWSLPLIVLAFIGWQELA) traverse the membrane as a helical segment. Topologically, residues 24 to 101 (NQMPVATSRM…DVDVHAVSNW (78 aa)) are lumenal. The helical transmembrane segment at 102 to 122 (INVASNWIIPLIIIGVVIWLL) threads the bilayer. Residues 123–603 (SRSASSNTTG…SQAARLTAVN (481 aa)) are Stromal-facing. An ATP-binding site is contributed by 194–201 (GPPGTGKT). Residue His-415 participates in Zn(2+) binding. The active site involves Glu-416. His-419 and Asp-493 together coordinate Zn(2+).

This sequence in the central section; belongs to the AAA ATPase family. The protein in the C-terminal section; belongs to the peptidase M41 family. In terms of assembly, homohexamer. Zn(2+) is required as a cofactor.

It is found in the plastid. The protein localises to the chloroplast thylakoid membrane. Its function is as follows. Acts as a processive, ATP-dependent zinc metallopeptidase. This Cyanidioschyzon merolae (strain NIES-3377 / 10D) (Unicellular red alga) protein is ATP-dependent zinc metalloprotease FtsH.